The following is a 386-amino-acid chain: ORC1-type DNA replication protein 3 (386 aa).

Residues 65–69 (TGKTF) and Y206 contribute to the ATP site.

It belongs to the CDC6/cdc18 family.

Involved in regulation of DNA replication. In Sulfurisphaera tokodaii (strain DSM 16993 / JCM 10545 / NBRC 100140 / 7) (Sulfolobus tokodaii), this protein is ORC1-type DNA replication protein 3 (cdc6-3).